The following is a 124-amino-acid chain: MNMKMLLTRIHEMNALISSELNGRVDFFKNHRMFILSLVKILLVCTSRESLSVMYFRFDSFFDFLSGGASLPVLDSLEYALSDAAAIDGILKLLRRAGLLAQYTYLATENCRGLLRKGLVKRDI.

This is an uncharacterized protein from Saccharomyces cerevisiae (strain ATCC 204508 / S288c) (Baker's yeast).